Here is a 403-residue protein sequence, read N- to C-terminus: MKENSCTACSRRLALFVGAAVLVVGCSSKTDVTLNRDKPLVFFNRQPSDPLTGKVDMAAMNWNDKTYYVGFDAKFGGSIQGKMILDFLASSESSVDRNGDGIIGYVLCIGDVGHNDSKVRTEGIRRALGTWTGSSDPGQAKEGQAVVGGKSYKVVELEGKAMTGTDGSTWNTNSATESMGSWVAKFADKIDLVISNNDGMAMGCLQASNYPRGLPIFGYDANADAVESVGKGELTGTVSQNVDAQAVAVLQIIRNLLDGSSGEDVVANGISRPDAHGNKISAPVQYWEDVKAIMADNSEVTSANWKEYTRGARDAGVRQVSAPTKKVLLTVHNASNDFLASAYLPALKHYAPLLNVDLTVVQGDGQNELSCLDKFTNLDMFDAFAVNMVKTNSGADYTDKLKY.

The signal sequence occupies residues Met1–Gly25. A lipid anchor (N-palmitoyl cysteine) is attached at Cys26. Cys26 carries the S-diacylglycerol cysteine lipid modification.

The protein belongs to the bacterial solute-binding protein 2 family.

It is found in the cell membrane. Its function is as follows. May be involved in the transport of sugars. May have a role in chemotaxis. This chain is Glucose/galactose-binding lipoprotein (mglB), found in Treponema pallidum (strain Nichols).